The chain runs to 1058 residues: SMC5-SMC6 complex localization factor protein 1 (1058 aa).

2 consecutive BRCT domains span residues 12 to 77 and 119 to 196; these read MTGF…IHSA and GAPG…GDFL. The tract at residues 410-1058 is NSE5-like domain; mediates interaction with SLF2; it reads PRGVLNLIES…MMCRSVMEFS (649 aa). ANK repeat units follow at residues 806-836, 840-869, and 874-903; these read KGETALHRACINNQVEKLILLLSLPGIDINV, AGWTPLHEACNYGNTVCVQEILQRCPEVDL, and DGVTPLHDALSNGHVEIGKLLLQHGGPVLL. Lys-931 is covalently cross-linked (Glycyl lysine isopeptide (Lys-Gly) (interchain with G-Cter in SUMO2)).

Interacts (via N-terminus) with SLF2; this interaction links RAD18 to the SMC5-SMC6 complex. Interacts (via BRCT domains) with RAD18; this interaction occurs in a SLF2-independent manner. Interacts with SMC6. Interacts (via BRCT domains) with RAD18 (via C-terminus and phosphorylated form); this interaction is required for efficient repair of UV-induced DNA damage.

It is found in the nucleus. Its subcellular location is the cytoplasm. The protein localises to the cytoskeleton. It localises to the microtubule organizing center. The protein resides in the centrosome. Functionally, plays a role in the DNA damage response (DDR) pathway by regulating postreplication repair of UV-damaged DNA and genomic stability maintenance. The SLF1-SLF2 complex acts to link RAD18 with the SMC5-SMC6 complex at replication-coupled interstrand cross-links (ICL) and DNA double-strand breaks (DSBs) sites on chromatin during DNA repair in response to stalled replication forks. Promotes the recruitment of SLF2 and the SMC5-SMC6 complex to DNA lesions. In Homo sapiens (Human), this protein is SMC5-SMC6 complex localization factor protein 1.